Consider the following 187-residue polypeptide: Orotate phosphoribosyltransferase (187 aa).

5-phospho-alpha-D-ribose 1-diphosphate-binding positions include Arg99, Lys100, Lys103, His105, and 125-133 (DDVITTGGS). The orotate site is built by Thr129 and Arg157.

Belongs to the purine/pyrimidine phosphoribosyltransferase family. PyrE subfamily. Homodimer. Requires Mg(2+) as cofactor.

The enzyme catalyses orotidine 5'-phosphate + diphosphate = orotate + 5-phospho-alpha-D-ribose 1-diphosphate. Its pathway is pyrimidine metabolism; UMP biosynthesis via de novo pathway; UMP from orotate: step 1/2. Its function is as follows. Catalyzes the transfer of a ribosyl phosphate group from 5-phosphoribose 1-diphosphate to orotate, leading to the formation of orotidine monophosphate (OMP). In Leptospira borgpetersenii serovar Hardjo-bovis (strain JB197), this protein is Orotate phosphoribosyltransferase.